Reading from the N-terminus, the 313-residue chain is uncharacterized protein (313 aa).

Disordered regions lie at residues 24–53 and 190–291; these read EEGE…PTPN and TALS…PCAR. The segment covering 211–229 has biased composition (polar residues); it reads TQNYVLKLQLSSPNSQPMS. Residues 239–260 are compositionally biased toward low complexity; that stretch reads SCSSSNCSSSSSSSACSSVSIS. The segment covering 261–284 has biased composition (polar residues); the sequence is DPNNITAYETNNVNPQFPSNQPLD.

This is an uncharacterized protein from Saccharomyces cerevisiae (strain ATCC 204508 / S288c) (Baker's yeast).